The following is a 297-amino-acid chain: Putative peptidyl-prolyl cis-trans isomerase YacD (297 aa).

A signal peptide spans 1–32 (MKSRTIWTIILGALLVCCIAVAYTLTKSQAGA). A PpiC domain is found at 154 to 247 (DDSYRIRHIV…NGYAIIQLKE (94 aa)).

The catalysed reaction is [protein]-peptidylproline (omega=180) = [protein]-peptidylproline (omega=0). This chain is Putative peptidyl-prolyl cis-trans isomerase YacD (yacD), found in Bacillus subtilis (strain 168).